We begin with the raw amino-acid sequence, 963 residues long: Importin-13 (963 aa).

HEAT repeat units follow at residues 24–54 (ESVE…QAQV), 56–88 (PQAW…KTSR), 95–135 (TDQY…LSMM), 142–179 (AVAD…EFQT), 194–231 (LAVE…SWVQ), 236–268 (LQDC…NAIS), 276–325 (VNTL…ALLD), 330–372 (WQSF…DDIL), 375–438 (EAEK…YEML), 440–476 (AELL…FQSI), 487–522 (VVPG…WLAD), 524–558 (PVMI…CREC), 562–600 (LPPY…LLSA), 603–648 (VEEI…SNLF), 676–716 (PVVV…VKTL), 720–754 (FAPM…VHIF), 761–803 (FPPI…ALKR), 815–845 (VKAV…TELL), 860–893 (EDGR…FALN), and 897–931 (FSLL…QQIL). The Importin N-terminal domain maps to 45 to 111 (AQKWLMQAQV…KAQLFTQITR (67 aa)).

This sequence belongs to the importin beta family. Interacts with UBC9, RAN, RBM8A, eIF-1A and PAX6.

It localises to the cytoplasm. It is found in the nucleus. Functions in nuclear protein import as nuclear transport receptor. Serves as receptor for nuclear localization signals (NLS) in cargo substrates. Is thought to mediate docking of the importin/substrate complex to the nuclear pore complex (NPC) through binding to nucleoporin and the complex is subsequently translocated through the pore by an energy requiring, Ran-dependent mechanism. At the nucleoplasmic side of the NPC, Ran binds to the importin, the importin/substrate complex dissociates and importin is re-exported from the nucleus to the cytoplasm where GTP hydrolysis releases Ran. The directionality of nuclear import is thought to be conferred by an asymmetric distribution of the GTP- and GDP-bound forms of Ran between the cytoplasm and nucleus. Mediates the nuclear import of UBC9, the RBM8A/MAGOH complex, PAX6 and probably other members of the paired homeobox family. Also mediates nuclear export of eIF-1A, and the cytoplasmic release of eIF-1A is triggered by the loading of import substrates onto IPO13. The protein is Importin-13 (IPO13) of Pongo abelii (Sumatran orangutan).